Reading from the N-terminus, the 589-residue chain is MLPRMLKMKTVGTVLAVIWLFGLAFIYVQSTSSSLRPPGRHPPPLPQLDPLIPQNPPQNDEIRPKKSAPPIPTINLAEDTTIHERTEKDVTWKTFDVEKFLNKGKWHQGEDKYKANSFNQEASDALNPTRKIPDSREPQCRDVDYSKVGMQPTTVIITYHNEARSSLLRTVFSVFNQSPEELLLEIVLVDDNSQDVEIGKELAQIQRITVLRNNQREGLIRSRVKGAQVARAPVLTFLDSHIECNQKWLEPLLARIAENPKAVVAPIIDVINVDNFNYVGASADLRGGFDWTLVFRWEFMNEQLRKERHAHPTAPIRSPTMAGGLFAISKEWFNELGTYDLDMEVWGGENLEMSFRVWQCGGSLEIMPCSRVGHVFRKKHPYTFPGGSGNVFQKNTRRAAEVWMDEYKAIYLKNVPSARFVNFGDITDRLAIRDRLQCKSFKWYLENVYPQLEIPRKTPGKSFQMKIGNLCLDSMARKESEAPGLFGCHGTGGNQEWVFDQLTKTFKNAISQLCLDFSSNTENKTVTMVKCENLRPDTMVVEKNGWLTQGGKCLTVNQGSGGDWLIYGAHCELNNGAQRWIFEKLDTYE.

Residues 1–11 (MLPRMLKMKTV) are Cytoplasmic-facing. A helical; Signal-anchor for type II membrane protein transmembrane segment spans residues 12–31 (GTVLAVIWLFGLAFIYVQST). The Lumenal portion of the chain corresponds to 32–589 (SSSLRPPGRH…WIFEKLDTYE (558 aa)). The interval 33 to 73 (SSLRPPGRHPPPLPQLDPLIPQNPPQNDEIRPKKSAPPIPT) is disordered. 5 disulfide bridges follow: cysteine 140/cysteine 369, cysteine 360/cysteine 438, cysteine 471/cysteine 488, cysteine 514/cysteine 531, and cysteine 553/cysteine 571. The interval 150 to 255 (MQPTTVIITY…QKWLEPLLAR (106 aa)) is catalytic subdomain A. Substrate-binding residues include aspartate 191 and arginine 216. Residue aspartate 239 coordinates Mn(2+). Serine 240 provides a ligand contact to substrate. Histidine 241 is a binding site for Mn(2+). Residues 315–377 (PIRSPTMAGG…PCSRVGHVFR (63 aa)) form a catalytic subdomain B region. Residue tryptophan 346 participates in substrate binding. Histidine 374 contributes to the Mn(2+) binding site. The substrate site is built by arginine 377, histidine 380, and tyrosine 382. In terms of domain architecture, Ricin B-type lectin spans 458–589 (TPGKSFQMKI…WIFEKLDTYE (132 aa)). N-linked (GlcNAc...) asparagine glycosylation occurs at asparagine 523.

It belongs to the glycosyltransferase 2 family. GalNAc-T subfamily. The cofactor is Mn(2+).

It localises to the golgi apparatus membrane. It catalyses the reaction L-seryl-[protein] + UDP-N-acetyl-alpha-D-galactosamine = a 3-O-[N-acetyl-alpha-D-galactosaminyl]-L-seryl-[protein] + UDP + H(+). The enzyme catalyses L-threonyl-[protein] + UDP-N-acetyl-alpha-D-galactosamine = a 3-O-[N-acetyl-alpha-D-galactosaminyl]-L-threonyl-[protein] + UDP + H(+). It participates in protein modification; protein glycosylation. Functionally, catalyzes the initial reaction in O-linked oligosaccharide biosynthesis, the transfer of an N-acetyl-D-galactosamine residue to a serine or threonine residue on the protein receptor. The sequence is that of Polypeptide N-acetylgalactosaminyltransferase 4 (gly-4) from Caenorhabditis elegans.